The following is a 292-amino-acid chain: High-affinity heme uptake system protein IsdE (292 aa).

The N-terminal stretch at M1–S19 is a signal peptide. C20 is lipidated: N-palmitoyl cysteine. The S-diacylglycerol cysteine moiety is linked to residue C20. In terms of domain architecture, Fe/B12 periplasmic-binding spans R35–K291. Residues V41, A42, S60, Y61, M78, and H229 each contribute to the heme site.

The protein belongs to the bacterial solute-binding protein 8 family. The cofactor is heme b.

It localises to the cell membrane. Functionally, involved in heme (porphyrin) scavenging. Binds Fe(2+) and Fe(3+) heme but the largest fraction is Fe(2+) heme. Functions as a high-affinity heme binding protein and probably has a role in relaying heme-iron from cell wall-anchored isd proteins receptors to the probable permease IsdF. The chain is High-affinity heme uptake system protein IsdE (isdE) from Staphylococcus aureus (strain bovine RF122 / ET3-1).